The sequence spans 505 residues: RNA-splicing ligase RtcB homolog (505 aa).

Positions 119, 122, 227, 259, and 353 each coordinate Mn(2+). Position 226-230 (226-230 (NHYAE)) interacts with GMP. GMP contacts are provided by residues 353–354 (HN), 402–405 (GGTM), Ser-409, 428–431 (HGAG), and Lys-504. Catalysis depends on His-428, which acts as the GMP-histidine intermediate.

It belongs to the RtcB family. Catalytic component of the tRNA-splicing ligase complex. Mn(2+) is required as a cofactor.

It is found in the nucleus. The protein localises to the cytoplasm. The enzyme catalyses a 3'-end 3'-phospho-ribonucleotide-RNA + a 5'-end dephospho-ribonucleoside-RNA + GTP = a ribonucleotidyl-ribonucleotide-RNA + GMP + diphosphate. The catalysed reaction is a 3'-end 2',3'-cyclophospho-ribonucleotide-RNA + a 5'-end dephospho-ribonucleoside-RNA + GTP + H2O = a ribonucleotidyl-ribonucleotide-RNA + GMP + diphosphate + H(+). Its function is as follows. Catalytic subunit of the tRNA-splicing ligase complex that acts by directly joining spliced tRNA halves to mature-sized tRNAs by incorporating the precursor-derived splice junction phosphate into the mature tRNA as a canonical 3',5'-phosphodiester. May act as an RNA ligase with broad substrate specificity, and may function toward other RNAs. This Xenopus tropicalis (Western clawed frog) protein is RNA-splicing ligase RtcB homolog.